The primary structure comprises 441 residues: Probable dihydroorotase-like protein (441 aa).

Residues 121–140 (VNAHHQPPGDPQAENRPDSA) form a disordered region.

Belongs to the metallo-dependent hydrolases superfamily. DHOase family. PyrC' subfamily.

Functionally, non-functional DHOase. The chain is Probable dihydroorotase-like protein (pyrC') from Synechocystis sp. (strain ATCC 27184 / PCC 6803 / Kazusa).